The primary structure comprises 336 residues: Geranylgeranyl pyrophosphate synthase 6, mitochondrial (336 aa).

The N-terminal 22 residues, 1–22, are a transit peptide targeting the mitochondrion; sequence MRPRYSLILSAMRLIRPSNRRL. Lys-80, Arg-83, and His-112 together coordinate isopentenyl diphosphate. Mg(2+) contacts are provided by Asp-119 and Asp-125. Dimethylallyl diphosphate is bound at residue Arg-130. Residue Arg-131 participates in isopentenyl diphosphate binding. Residues Lys-221, Thr-222, Gln-259, Lys-276, and Lys-286 each contribute to the dimethylallyl diphosphate site.

Belongs to the FPP/GGPP synthase family. Monomer. Requires Mg(2+) as cofactor.

It is found in the mitochondrion. It catalyses the reaction isopentenyl diphosphate + dimethylallyl diphosphate = (2E)-geranyl diphosphate + diphosphate. The enzyme catalyses isopentenyl diphosphate + (2E)-geranyl diphosphate = (2E,6E)-farnesyl diphosphate + diphosphate. The catalysed reaction is isopentenyl diphosphate + (2E,6E)-farnesyl diphosphate = (2E,6E,10E)-geranylgeranyl diphosphate + diphosphate. Its pathway is isoprenoid biosynthesis; farnesyl diphosphate biosynthesis; farnesyl diphosphate from geranyl diphosphate and isopentenyl diphosphate: step 1/1. It functions in the pathway isoprenoid biosynthesis; geranyl diphosphate biosynthesis; geranyl diphosphate from dimethylallyl diphosphate and isopentenyl diphosphate: step 1/1. It participates in isoprenoid biosynthesis; geranylgeranyl diphosphate biosynthesis; geranylgeranyl diphosphate from farnesyl diphosphate and isopentenyl diphosphate: step 1/1. Functionally, catalyzes the trans-addition of the three molecules of IPP onto DMAPP to form geranylgeranyl pyrophosphate. The polypeptide is Geranylgeranyl pyrophosphate synthase 6, mitochondrial (Arabidopsis thaliana (Mouse-ear cress)).